Consider the following 429-residue polypeptide: Glutamate-1-semialdehyde 2,1-aminomutase (429 aa).

The residue at position 266 (Lys266) is an N6-(pyridoxal phosphate)lysine.

The protein belongs to the class-III pyridoxal-phosphate-dependent aminotransferase family. HemL subfamily. Requires pyridoxal 5'-phosphate as cofactor.

The protein localises to the cytoplasm. It carries out the reaction (S)-4-amino-5-oxopentanoate = 5-aminolevulinate. It participates in porphyrin-containing compound metabolism; protoporphyrin-IX biosynthesis; 5-aminolevulinate from L-glutamyl-tRNA(Glu): step 2/2. The chain is Glutamate-1-semialdehyde 2,1-aminomutase (hemL) from Aeropyrum pernix (strain ATCC 700893 / DSM 11879 / JCM 9820 / NBRC 100138 / K1).